Here is a 46-residue protein sequence, read N- to C-terminus: Iota-conotoxin-like M11.1 (46 aa).

4 disulfide bridges follow: cysteine 5/cysteine 19, cysteine 12/cysteine 22, cysteine 18/cysteine 27, and cysteine 21/cysteine 38. Methionine 44 is modified (D-methionine). A propeptide (removed by a carboxypeptidase) is located at residue arginine 46.

It belongs to the conotoxin I1 superfamily. As to expression, expressed by the venom duct.

The protein resides in the secreted. Iota-conotoxins bind to voltage-gated sodium channels (Nav) and act as agonists by shifting the voltage-dependence of activation to more hyperpolarized levels. Produces general excitatory symptoms. The chain is Iota-conotoxin-like M11.1 from Conus magus (Magical cone).